Reading from the N-terminus, the 152-residue chain is MTTVWKVLVLHGPNLNLLGQREPGIYGSLTLGEIDACLREDGVDLEAEVSTFQSNSEGQLVTAIHGALGNYHGIVFNAAAYTHTSIALRDALAAVQLPCVEVHLSNIHKRESFRHISHIAPVAIGQICGFGLNSYRLGLRALVDYLNGQADS.

Tyr-26 functions as the Proton acceptor in the catalytic mechanism. Substrate contacts are provided by Asn-77, His-83, and Asp-90. His-103 functions as the Proton donor in the catalytic mechanism. Substrate contacts are provided by residues 104–105 (LS) and Arg-114.

This sequence belongs to the type-II 3-dehydroquinase family. Homododecamer.

It carries out the reaction 3-dehydroquinate = 3-dehydroshikimate + H2O. The protein operates within metabolic intermediate biosynthesis; chorismate biosynthesis; chorismate from D-erythrose 4-phosphate and phosphoenolpyruvate: step 3/7. In terms of biological role, catalyzes a trans-dehydration via an enolate intermediate. The sequence is that of 3-dehydroquinate dehydratase (aroQ) from Synechocystis sp. (strain ATCC 27184 / PCC 6803 / Kazusa).